The following is a 458-amino-acid chain: Methionine aminopeptidase 2-2 (458 aa).

Residues 1–14 show a composition bias toward basic and acidic residues; the sequence is MGSKTPERDGHKGQ. The disordered stretch occupies residues 1 to 93; it reads MGSKTPERDG…QSSPPRVPLS (93 aa). The segment covering 67 to 82 has biased composition (basic residues); that stretch reads QKKKRKSKKKGKKKAA. Histidine 209 lines the substrate pocket. The a divalent metal cation site is built by aspartate 230, aspartate 241, and histidine 310. A substrate-binding site is contributed by histidine 318. A divalent metal cation-binding residues include glutamate 343 and glutamate 439.

It belongs to the peptidase M24A family. Methionine aminopeptidase eukaryotic type 2 subfamily. Requires Co(2+) as cofactor. The cofactor is Zn(2+). Mn(2+) serves as cofactor. Fe(2+) is required as a cofactor.

Its subcellular location is the cytoplasm. The catalysed reaction is Release of N-terminal amino acids, preferentially methionine, from peptides and arylamides.. Its function is as follows. Cotranslationally removes the N-terminal methionine from nascent proteins. The N-terminal methionine is often cleaved when the second residue in the primary sequence is small and uncharged (Met-Ala-, Cys, Gly, Pro, Ser, Thr, or Val). The protein is Methionine aminopeptidase 2-2 of Emericella nidulans (strain FGSC A4 / ATCC 38163 / CBS 112.46 / NRRL 194 / M139) (Aspergillus nidulans).